The primary structure comprises 513 residues: Cytochrome P450 4d10 (513 aa).

Residues glutamate 317 and cysteine 457 each coordinate heme.

Belongs to the cytochrome P450 family. Requires heme as cofactor.

It localises to the endoplasmic reticulum membrane. Its subcellular location is the microsome membrane. Functionally, may play an important role in the maintenance of specific insect-host plant relationships. May be involved in xenobiotic metabolism. This Drosophila mettleri (Fruit fly) protein is Cytochrome P450 4d10 (Cyp4d10).